Consider the following 311-residue polypeptide: 3-dehydro-scyllo-inosose hydrolase (311 aa).

Glutamate 35, histidine 37, aspartate 46, histidine 117, and glutamate 173 together coordinate Zn(2+).

It belongs to the creatininase superfamily. As to quaternary structure, homotrimer. Zn(2+) serves as cofactor.

The catalysed reaction is 3-dehydro-scyllo-inosose + H2O = 5-dehydro-L-gluconate + H(+). It participates in polyol metabolism; myo-inositol metabolism. In terms of biological role, catalyzes the ring-opening hydrolysis of 3-dehydro-scyllo-inosose (diketo-inositol) to 5-dehydro-L-gluconate, and thus probably functions in a myo-inositol degradation pathway together with IolG, IolM and IolO. The protein is 3-dehydro-scyllo-inosose hydrolase of Thermotoga maritima (strain ATCC 43589 / DSM 3109 / JCM 10099 / NBRC 100826 / MSB8).